A 164-amino-acid polypeptide reads, in one-letter code: MVNPTVFFDISADGEPLGRVSFELFADKVPKTAENFRALSTGEKGFGYKGSSFHRIIPGFMCQGGDFTRHNGTGGRSIYGEKFEDENFILKHTGPGILSMANAGPNTNGSQFFICTAKTEWLDGKHVVFGKVKEGMNIVEAMERFGSRNGKTSKKITISDCGQL.

Methionine 1 bears the N-acetylmethionine mark. Valine 2 carries the N-acetylvaline; in Peptidyl-prolyl cis-trans isomerase A, N-terminally processed modification. One can recognise a PPIase cyclophilin-type domain in the interval 7–163 (FFDISADGEP…KKITISDCGQ (157 aa)). At lysine 28 the chain carries N6-acetyllysine; alternate. Lysine 28 is covalently cross-linked (Glycyl lysine isopeptide (Lys-Gly) (interchain with G-Cter in SUMO2); alternate). Residue lysine 28 forms a Glycyl lysine isopeptide (Lys-Gly) (interchain with G-Cter in ubiquitin); alternate linkage. At lysine 44 the chain carries N6-acetyllysine. Serine 77 is subject to Phosphoserine. Residue lysine 82 is modified to N6-acetyllysine; alternate. Lysine 82 participates in a covalent cross-link: Glycyl lysine isopeptide (Lys-Gly) (interchain with G-Cter in SUMO2); alternate. Threonine 93 is modified (phosphothreonine). A glycan (N-linked (GlcNAc...) asparagine) is linked at asparagine 108. N6-acetyllysine occurs at positions 125, 131, and 133.

Belongs to the cyclophilin-type PPIase family. PPIase A subfamily. In terms of assembly, interacts with protein phosphatase PPP3CA/calcineurin A. Interacts with PRPF19 isoform 2 (via N-terminus). Interacts with isoform 2 of BSG/CD147. Interacts with FOXO1; the interaction promotes FOXO1 dephosphorylation, nuclear accumulation and transcriptional activity. Interacts with integrin ITGA2B:ITGB3; the interaction is ROS and peptidyl-prolyl cis-trans isomerase (PPIase) activity-dependent and is increased in the presence of thrombin. Interacts with MAP3K5. Interacts with TARDBP; the interaction is dependent on the RNA-binding activity of TARDBP and the PPIase activity of PPIA/CYPA and the acetylation of PPIA/CYPA at Lys-125 favors the interaction. Interacts with HNRNPA1, HNRNPA2B1, HNRNPC, RBMX, HNRNPK and HNRNPM. Post-translationally, acetylation at Lys-125 markedly inhibits catalysis of cis to trans isomerization. PPIA acetylation also antagonizes the immunosuppressive effects of cyclosporine by inhibiting the sequential steps of cyclosporine binding and calcineurin inhibition. Acetylation at Lys-125 favors the interaction with TARDBP.

It is found in the cytoplasm. The protein resides in the secreted. It localises to the nucleus. The catalysed reaction is [protein]-peptidylproline (omega=180) = [protein]-peptidylproline (omega=0). Its activity is regulated as follows. Binds cyclosporin A (CsA). CsA mediates some of its effects via an inhibitory action on PPIase. Its function is as follows. Catalyzes the cis-trans isomerization of proline imidic peptide bonds in oligopeptides. Exerts a strong chemotactic effect on leukocytes partly through activation of one of its membrane receptors BSG/CD147, initiating a signaling cascade that culminates in MAPK/ERK activation. Activates endothelial cells (ECs) in a proinflammatory manner by stimulating activation of NF-kappa-B and ERK, JNK and p38 MAP-kinases and by inducing expression of adhesion molecules including SELE and VCAM1. Induces apoptosis in ECs by promoting the FOXO1-dependent expression of CCL2 and BCL2L11 which are involved in EC chemotaxis and apoptosis. In response to oxidative stress, initiates proapoptotic and antiapoptotic signaling in ECs via activation of NF-kappa-B and AKT1 and up-regulation of antiapoptotic protein BCL2. Negatively regulates MAP3K5/ASK1 kinase activity, autophosphorylation and oxidative stress-induced apoptosis mediated by MAP3K5/ASK1. Necessary for the assembly of TARDBP in heterogeneous nuclear ribonucleoprotein (hnRNP) complexes and regulates TARDBP binding to RNA UG repeats and TARDBP-dependent expression of HDAC6, ATG7 and VCP which are involved in clearance of protein aggregates. Plays an important role in platelet activation and aggregation. Regulates calcium mobilization and integrin ITGA2B:ITGB3 bidirectional signaling via increased ROS production as well as by facilitating the interaction between integrin and the cell cytoskeleton. Binds heparan sulfate glycosaminoglycans. The protein is Peptidyl-prolyl cis-trans isomerase A (PPIA) of Cricetulus griseus (Chinese hamster).